The chain runs to 932 residues: Protocadherin gamma-A9 (932 aa).

The signal sequence occupies residues 1–28; sequence MAAPTKCQLRGRLVLLCSLLGMLWEARA. 6 Cadherin domains span residues 29–133, 134–242, 243–347, 348–452, 453–562, and 570–683; these read SQIR…APKF, QAES…APVF, AQRI…RPEV, TITS…PPAF, SQAS…APEI, and DGST…IPAD. Residues 29–692 are Extracellular-facing; that stretch reads SQIRYSVPEE…DLEASDLTLY (664 aa). 2 N-linked (GlcNAc...) asparagine glycosylation sites follow: N47 and N127. N-linked (GlcNAc...) asparagine glycans are attached at residues N389, N419, and N545. The chain crosses the membrane as a helical span at residues 693–713; sequence LVVAVAVVSCVFLTFVITLLA. The Cytoplasmic segment spans residues 714–932; sequence LRLRHWHSSH…KKKSGKKEKK (219 aa). Disordered regions lie at residues 803–841 and 902–932; these read DTPLVPQAPPNTDWRFSQAQRPGTSGSQNGDDTGTWPNN and ATLTNAAGKRDGKAPAGGNGNKKKSGKKEKK. Residues 816–841 show a composition bias toward polar residues; that stretch reads WRFSQAQRPGTSGSQNGDDTGTWPNN. Positions 922-932 are enriched in basic residues; sequence NKKKSGKKEKK.

It localises to the cell membrane. Its function is as follows. Potential calcium-dependent cell-adhesion protein. May be involved in the establishment and maintenance of specific neuronal connections in the brain. The sequence is that of Protocadherin gamma-A9 (PCDHGA9) from Homo sapiens (Human).